Consider the following 84-residue polypeptide: MEPSNQIFFYLRRSKLLSGLGEIRMAKGQPLGTMERCYDMLTWGECVPDNCAFSCALKRHGKGGCIKAYDNRPACVCYYTCLRS.

An N-terminal signal peptide occupies residues 1 to 28 (MEPSNQIFFYLRRSKLLSGLGEIRMAKG). Intrachain disulfides connect Cys37-Cys81, Cys46-Cys65, Cys51-Cys75, and Cys55-Cys77.

It belongs to the DEFL family.

It localises to the secreted. The chain is Putative defensin-like protein 139 (LCR7) from Arabidopsis thaliana (Mouse-ear cress).